Reading from the N-terminus, the 782-residue chain is E3 ubiquitin-protein ligase SopA (782 aa).

The tract at residues 137–171 (VSVSANNRPTVSEGRTPPVSPSLSLQATSSPSSPA) is disordered. A compositionally biased stretch (low complexity) spans 157 to 171 (PSLSLQATSSPSSPA). The active-site Glycyl thioester intermediate is the Cys-753.

Belongs to the SopA E3 ligase family. Post-translationally, ubiquitinated in the presence of host E1 ubiquitin-activating enzyme, E2 ubiquitin-conjugating enzyme and ubiquitin.

The protein localises to the secreted. It is found in the host cell. It catalyses the reaction S-ubiquitinyl-[E2 ubiquitin-conjugating enzyme]-L-cysteine + [acceptor protein]-L-lysine = [E2 ubiquitin-conjugating enzyme]-L-cysteine + N(6)-ubiquitinyl-[acceptor protein]-L-lysine.. Functionally, effector proteins function to alter host cell physiology and promote bacterial survival in host tissues. This protein is an E3 ubiquitin ligase that interferes with host's ubiquitination pathway. The polypeptide is E3 ubiquitin-protein ligase SopA (sopA) (Salmonella dublin (strain CT_02021853)).